The sequence spans 104 residues: Large ribosomal subunit protein uL24 (104 aa).

The protein belongs to the universal ribosomal protein uL24 family. Part of the 50S ribosomal subunit.

In terms of biological role, one of two assembly initiator proteins, it binds directly to the 5'-end of the 23S rRNA, where it nucleates assembly of the 50S subunit. Its function is as follows. One of the proteins that surrounds the polypeptide exit tunnel on the outside of the subunit. The protein is Large ribosomal subunit protein uL24 of Ectopseudomonas mendocina (strain ymp) (Pseudomonas mendocina).